The following is a 391-amino-acid chain: NADH-quinone oxidoreductase subunit D (391 aa).

The protein belongs to the complex I 49 kDa subunit family. In terms of assembly, NDH-1 is composed of 14 different subunits. Subunits NuoB, C, D, E, F, and G constitute the peripheral sector of the complex.

It localises to the cell inner membrane. The enzyme catalyses a quinone + NADH + 5 H(+)(in) = a quinol + NAD(+) + 4 H(+)(out). Functionally, NDH-1 shuttles electrons from NADH, via FMN and iron-sulfur (Fe-S) centers, to quinones in the respiratory chain. The immediate electron acceptor for the enzyme in this species is believed to be ubiquinone. Couples the redox reaction to proton translocation (for every two electrons transferred, four hydrogen ions are translocated across the cytoplasmic membrane), and thus conserves the redox energy in a proton gradient. The polypeptide is NADH-quinone oxidoreductase subunit D (Pelagibacter ubique (strain HTCC1062)).